A 174-amino-acid chain; its full sequence is Ribosome maturation factor RimM (174 aa).

The PRC barrel domain occupies 101–174 (AGEFYLADLC…IELLQRWILE (74 aa)).

It belongs to the RimM family. As to quaternary structure, binds ribosomal protein uS19.

The protein resides in the cytoplasm. In terms of biological role, an accessory protein needed during the final step in the assembly of 30S ribosomal subunit, possibly for assembly of the head region. Essential for efficient processing of 16S rRNA. May be needed both before and after RbfA during the maturation of 16S rRNA. It has affinity for free ribosomal 30S subunits but not for 70S ribosomes. The protein is Ribosome maturation factor RimM of Treponema pallidum (strain Nichols).